Here is a 141-residue protein sequence, read N- to C-terminus: uncharacterized protein (141 aa).

The span at 1–17 (MNKSESENDSEYHKEYS) shows a compositional bias: basic and acidic residues. Residues 1–24 (MNKSESENDSEYHKEYSESSDPED) form a disordered region. Positions 52 to 115 (IQNLNNNVKE…QMLFEKMRDM (64 aa)) form a coiled coil.

This is an uncharacterized protein from Acanthamoeba polyphaga (Amoeba).